The following is a 130-amino-acid chain: Small ribosomal subunit protein uS9 (130 aa).

A disordered region spans residues 101–130 (AGLLTRDARMKERKKPGLKKARKASQFSKR). Residues 111–130 (KERKKPGLKKARKASQFSKR) are compositionally biased toward basic residues.

This sequence belongs to the universal ribosomal protein uS9 family.

This Levilactobacillus brevis (strain ATCC 367 / BCRC 12310 / CIP 105137 / JCM 1170 / LMG 11437 / NCIMB 947 / NCTC 947) (Lactobacillus brevis) protein is Small ribosomal subunit protein uS9.